A 670-amino-acid polypeptide reads, in one-letter code: tRNA 5-methylaminomethyl-2-thiouridine biosynthesis bifunctional protein MnmC (670 aa).

Positions 1 to 245 are tRNA (mnm(5)s(2)U34)-methyltransferase; the sequence is MKPIAIQPAS…KREMLTGALS (245 aa). An FAD-dependent cmnm(5)s(2)U34 oxidoreductase region spans residues 271–670; the sequence is VGGGIASALL…RKLLKGRAAS (400 aa).

It in the N-terminal section; belongs to the methyltransferase superfamily. tRNA (mnm(5)s(2)U34)-methyltransferase family. This sequence in the C-terminal section; belongs to the DAO family. FAD is required as a cofactor.

Its subcellular location is the cytoplasm. It catalyses the reaction 5-aminomethyl-2-thiouridine(34) in tRNA + S-adenosyl-L-methionine = 5-methylaminomethyl-2-thiouridine(34) in tRNA + S-adenosyl-L-homocysteine + H(+). In terms of biological role, catalyzes the last two steps in the biosynthesis of 5-methylaminomethyl-2-thiouridine (mnm(5)s(2)U) at the wobble position (U34) in tRNA. Catalyzes the FAD-dependent demodification of cmnm(5)s(2)U34 to nm(5)s(2)U34, followed by the transfer of a methyl group from S-adenosyl-L-methionine to nm(5)s(2)U34, to form mnm(5)s(2)U34. In Cronobacter sakazakii (strain ATCC BAA-894) (Enterobacter sakazakii), this protein is tRNA 5-methylaminomethyl-2-thiouridine biosynthesis bifunctional protein MnmC.